The sequence spans 563 residues: Arginine--tRNA ligase (563 aa).

The short motif at 121–131 is the 'HIGH' region element; that stretch reads PNIAKPFSIGH.

The protein belongs to the class-I aminoacyl-tRNA synthetase family. Monomer.

It localises to the cytoplasm. The catalysed reaction is tRNA(Arg) + L-arginine + ATP = L-arginyl-tRNA(Arg) + AMP + diphosphate. The protein is Arginine--tRNA ligase (argS) of Streptococcus pneumoniae serotype 4 (strain ATCC BAA-334 / TIGR4).